The sequence spans 45 residues: Large ribosomal subunit protein bL34 (45 aa).

A disordered region spans residues 1–45 (MTKRTLGGTSRKRKRVSGFRVRMRSHTGRRVIRTRRKRGRSRLAV). Over residues 10–45 (SRKRKRVSGFRVRMRSHTGRRVIRTRRKRGRSRLAV) the composition is skewed to basic residues.

The protein belongs to the bacterial ribosomal protein bL34 family.

The chain is Large ribosomal subunit protein bL34 from Parasynechococcus marenigrum (strain WH8102).